The primary structure comprises 275 residues: Ribosomal RNA small subunit methyltransferase A (275 aa).

6 residues coordinate S-adenosyl-L-methionine: Asn21, Leu23, Gly48, Glu69, Asp94, and Asn115.

The protein belongs to the class I-like SAM-binding methyltransferase superfamily. rRNA adenine N(6)-methyltransferase family. RsmA subfamily.

The protein localises to the cytoplasm. It carries out the reaction adenosine(1518)/adenosine(1519) in 16S rRNA + 4 S-adenosyl-L-methionine = N(6)-dimethyladenosine(1518)/N(6)-dimethyladenosine(1519) in 16S rRNA + 4 S-adenosyl-L-homocysteine + 4 H(+). In terms of biological role, specifically dimethylates two adjacent adenosines (A1518 and A1519) in the loop of a conserved hairpin near the 3'-end of 16S rRNA in the 30S particle. May play a critical role in biogenesis of 30S subunits. In Clostridium botulinum (strain Okra / Type B1), this protein is Ribosomal RNA small subunit methyltransferase A.